We begin with the raw amino-acid sequence, 154 residues long: MAARLYCQLDSSRNVLCLRPVGAESCGRPLSGPVGTLSSPSPSAVPTDHGAHLSLRGLPVCAFSSAGPCALRFTSARCMETTVNAHQILPKVLYKRTLGLPAMSTTDLEAYFKDCVFKDWEELGEEIRLKIFVLGGCRHKLVCAPFSCNFFTSA.

Residues 68–117 are mitochondrial targeting sequence; sequence PCALRFTSARCMETTVNAHQILPKVLYKRTLGLPAMSTTDLEAYFKDCVF.

The protein belongs to the orthohepadnavirus protein X family. In terms of assembly, may form homodimer. May interact with host CEBPA, CFLAR, CREB1, DDB1, E4F1, HBXIP, HSPD1/HSP60, NFKBIA, POLR2E and SMAD4. Interacts with host SMC5-SMC6 complex and induces its degradation. Interacts with host TRPC4AP; leading to prevent ubiquitination of TRPC4AP. Interacts with host PLSCR1; this interaction promotes ubiquitination and degradation of HBx and impairs HBx-mediated cell proliferation. In terms of processing, a fraction may be phosphorylated in insect cells and HepG2 cells, a human hepatoblastoma cell line. Phosphorylated in vitro by host protein kinase C or mitogen-activated protein kinase. N-acetylated in insect cells.

The protein resides in the host cytoplasm. Its subcellular location is the host nucleus. It is found in the host mitochondrion. In terms of biological role, multifunctional protein that plays a role in silencing host antiviral defenses and promoting viral transcription. Does not seem to be essential for HBV infection. May be directly involved in development of cirrhosis and liver cancer (hepatocellular carcinoma). Most of cytosolic activities involve modulation of cytosolic calcium. The effect on apoptosis is controversial depending on the cell types in which the studies have been conducted. May induce apoptosis by localizing in mitochondria and causing loss of mitochondrial membrane potential. May also modulate apoptosis by binding host CFLAR, a key regulator of the death-inducing signaling complex (DISC). Promotes viral transcription by using the host E3 ubiquitin ligase DDB1 to target the SMC5-SMC6 complex to proteasomal degradation. This host complex would otherwise bind to viral episomal DNA, and prevents its transcription. Moderately stimulates transcription of many different viral and cellular transcription elements. Promoters and enhancers stimulated by HBx contain DNA binding sites for NF-kappa-B, AP-1, AP-2, c-EBP, ATF/CREB, or the calcium-activated factor NF-AT. This chain is Protein X, found in Homo sapiens (Human).